The following is a 216-amino-acid chain: Octanoyltransferase (216 aa).

The BPL/LPL catalytic domain maps to 33–216; it reads AQTADELWIV…AEKLTRHLSG (184 aa). Residues 72 to 79, 148 to 150, and 162 to 164 each bind substrate; these read RGGEVTYH, ALG, and GVS. The active-site Acyl-thioester intermediate is Cys-180.

It belongs to the LipB family.

It localises to the cytoplasm. It carries out the reaction octanoyl-[ACP] + L-lysyl-[protein] = N(6)-octanoyl-L-lysyl-[protein] + holo-[ACP] + H(+). It functions in the pathway protein modification; protein lipoylation via endogenous pathway; protein N(6)-(lipoyl)lysine from octanoyl-[acyl-carrier-protein]: step 1/2. Its function is as follows. Catalyzes the transfer of endogenously produced octanoic acid from octanoyl-acyl-carrier-protein onto the lipoyl domains of lipoate-dependent enzymes. Lipoyl-ACP can also act as a substrate although octanoyl-ACP is likely to be the physiological substrate. The polypeptide is Octanoyltransferase (Herminiimonas arsenicoxydans).